We begin with the raw amino-acid sequence, 118 residues long: Myotrophin (118 aa).

ANK repeat units follow at residues 1 to 30 (MGDK…DVNR), 34 to 65 (GGRK…NAAD), and 67 to 98 (HGIT…TVKG).

The protein belongs to the myotrophin family.

Its subcellular location is the cytoplasm. It localises to the nucleus. It is found in the perinuclear region. In terms of biological role, regulates NF-kappa-B transcription factor activity. Promotes growth of cardiomyocytes, but not cardiomyocyte proliferation. Promotes cardiac muscle hypertrophy. Plays a role in the regulation of the growth of actin filaments. Inhibits the activity of the F-actin-capping protein complex. This Xenopus tropicalis (Western clawed frog) protein is Myotrophin (mtpn).